The chain runs to 288 residues: Pteridine reductase 1 (288 aa).

Residue 17–40 (RLGRSIAEGLHAEGYAVCLHYHRS) coordinates NADP(+). Ser175 serves as a coordination point for substrate. The active-site Proton acceptor is Tyr194.

This sequence belongs to the short-chain dehydrogenases/reductases (SDR) family. Homotetramer.

The catalysed reaction is (6R)-L-erythro-5,6,7,8-tetrahydrobiopterin + 2 NADP(+) = L-erythro-biopterin + 2 NADPH + 2 H(+). It functions in the pathway cofactor biosynthesis; tetrahydrobiopterin biosynthesis; tetrahydrobiopterin from biopterin: step 1/1. In terms of biological role, exhibits a NADPH-dependent biopterin reductase activity. Has good activity with folate and significant activity with dihydrofolate and dihydrobiopterin, but not with quinonoid dihydrobiopterin. Confers resistance to methotrexate (MTX). In Leishmania major, this protein is Pteridine reductase 1 (PTR1).